A 1054-amino-acid polypeptide reads, in one-letter code: Kinesin-like protein KIN-7G (1054 aa).

Residues 17 to 341 (KIFVSVRLRP…LLFASCAKEV (325 aa)) enclose the Kinesin motor domain. 105 to 112 (GQTSSGKT) is an ATP binding site. Coiled coils occupy residues 350 to 425 (VMSD…IGEA) and 611 to 640 (TETA…VSSV). 2 disordered regions span residues 600-648 (CEPE…KEKS) and 740-760 (ERAE…PKHI). Positions 613–631 (TAEEKEEKEETEEKEEEEE) are enriched in acidic residues.

The protein belongs to the TRAFAC class myosin-kinesin ATPase superfamily. Kinesin family. KIN-7 subfamily.

In Arabidopsis thaliana (Mouse-ear cress), this protein is Kinesin-like protein KIN-7G.